Here is a 116-residue protein sequence, read N- to C-terminus: Large ribosomal subunit protein uL18 (116 aa).

It belongs to the universal ribosomal protein uL18 family. Part of the 50S ribosomal subunit; part of the 5S rRNA/L5/L18/L25 subcomplex. Contacts the 5S and 23S rRNAs.

Functionally, this is one of the proteins that bind and probably mediate the attachment of the 5S RNA into the large ribosomal subunit, where it forms part of the central protuberance. This Pseudomonas aeruginosa (strain UCBPP-PA14) protein is Large ribosomal subunit protein uL18.